The sequence spans 115 residues: Pro-neuregulin-4, membrane-bound isoform (115 aa).

The Extracellular portion of the chain corresponds to 1–62 (MPTDHEQPCG…SSIPSESNLS (62 aa)). Residues 5 to 46 (HEQPCGPRHRSFCLNGGICYVIPTIPSPFCRCIENYTGARCE) form the EGF-like domain. 3 disulfides stabilise this stretch: Cys-9–Cys-23, Cys-17–Cys-34, and Cys-36–Cys-45. Asn-39 and Asn-60 each carry an N-linked (GlcNAc...) asparagine glycan. The chain crosses the membrane as a helical span at residues 63 to 83 (AAFVVLAVLLTLTIAALCFLC). The Cytoplasmic segment spans residues 84–115 (RKGHLQRASSVQCEISLVETNNTRTRHSHREH).

The protein belongs to the neuregulin family. In terms of assembly, interacts with ERBB4. Post-translationally, proteolytic cleavage close to the plasma membrane on the external face leads to the release of the soluble growth factor form. In terms of processing, extensive glycosylation precedes the proteolytic cleavage. As to expression, highly expressed in pancreas; weakly expressed in muscle.

The protein resides in the cell membrane. It localises to the secreted. Low affinity ligand for the ERBB4 tyrosine kinase receptor. Concomitantly recruits ERBB1 and ERBB2 coreceptors, resulting in ligand-stimulated tyrosine phosphorylation and activation of the ERBB receptors. Does not bind to the ERBB1, ERBB2 and ERBB3 receptors. The sequence is that of Pro-neuregulin-4, membrane-bound isoform (Nrg4) from Mus musculus (Mouse).